The sequence spans 1400 residues: Macrophage-stimulating protein receptor (1400 aa).

A signal peptide spans 1–24 (MELLPPLPQSFLLLLLLPAKPAAG). At 25 to 957 (EDWQCPRTPY…PGPDGVPQST (933 aa)) the chain is on the extracellular side. The region spanning 31–522 (RTPYAASRDF…SGDQVFQVPI (492 aa)) is the Sema domain. Asn66 is a glycosylation site (N-linked (GlcNAc...) asparagine). 7 cysteine pairs are disulfide-bonded: Cys101-Cys104, Cys107-Cys162, Cys135-Cys143, Cys174-Cys177, Cys300-Cys367, Cys385-Cys407, and Cys386-Cys422. N-linked (GlcNAc...) asparagine glycosylation is found at Asn419, Asn458, and Asn488. 4 disulfide bridges follow: Cys527–Cys545, Cys533–Cys567, Cys536–Cys552, and Cys548–Cys558. IPT/TIG domains are found at residues 569 to 671 (PKLT…FRVD), 684 to 767 (PVLI…FQYR), and 770 to 860 (PVVL…FRFL). 4 N-linked (GlcNAc...) asparagine glycosylation sites follow: Asn654, Asn720, Asn841, and Asn897. The helical transmembrane segment at 958 to 978 (LLGILLPLLLLVAALATALVF) threads the bilayer. The Cytoplasmic segment spans residues 979–1400 (SYWWRRKQLV…RPLSEPPRPT (422 aa)). The Protein kinase domain maps to 1082–1345 (THSDRVIGKG…VLVGEVEQIV (264 aa)). ATP-binding positions include 1088–1096 (IGKGHFGVV), Lys1114, and 1161–1164 (LPYM). Catalysis depends on Asp1208, which acts as the Proton acceptor. Arg1212 contributes to the ATP binding site. Phosphotyrosine; by autocatalysis occurs at positions 1238, 1239, 1353, and 1360. Positions 1367-1400 (TSHEMNVRPEQPQFSPMPGNVRRPRPLSEPPRPT) are disordered.

The protein belongs to the protein kinase superfamily. Tyr protein kinase family. As to quaternary structure, heterodimer of an alpha chain and a beta chain which are disulfide linked. Binds PLXNB1. Associates with and is negatively regulated by HYAL2. Interacts when phosphorylated with downstream effectors including PIK3R1, PCLG1, GRB2 and GAB1. Interacts with integrin beta1/ITGB1 in a ligand-independent fashion. In terms of processing, proteolytic processing yields the two subunits. Post-translationally, autophosphorylated in response to ligand binding on Tyr-1238 and Tyr-1239 in the kinase domain leading to further phosphorylation of Tyr-1353 and Tyr-1360 in the C-terminal multifunctional docking site. Ubiquitinated. Ubiquitination by CBL regulates the receptor stability and activity through proteasomal degradation. In terms of processing, O-mannosylation of IPT/TIG domains on Thr or Ser residues by TMEM260 is required for protein maturation. O-mannosylated residues are composed of single mannose glycans that are not elongated or modified. Expressed in colon, skin, lung and bone marrow.

The protein localises to the membrane. It catalyses the reaction L-tyrosyl-[protein] + ATP = O-phospho-L-tyrosyl-[protein] + ADP + H(+). With respect to regulation, in its inactive state, the C-terminal tail interacts with the catalytic domain and inhibits the kinase activity. Upon ligand binding, the C-terminal tail is displaced and becomes phosphorylated, thus increasing the kinase activity. In terms of biological role, receptor tyrosine kinase that transduces signals from the extracellular matrix into the cytoplasm by binding to MST1 ligand. Regulates many physiological processes including cell survival, migration and differentiation. Ligand binding at the cell surface induces autophosphorylation of RON on its intracellular domain that provides docking sites for downstream signaling molecules. Following activation by ligand, interacts with the PI3-kinase subunit PIK3R1, PLCG1 or the adapter GAB1. Recruitment of these downstream effectors by RON leads to the activation of several signaling cascades including the RAS-ERK, PI3 kinase-AKT, or PLCgamma-PKC. RON signaling activates the wound healing response by promoting epithelial cell migration, proliferation as well as survival at the wound site. Also plays a role in the innate immune response by regulating the migration and phagocytic activity of macrophages. Alternatively, RON can also promote signals such as cell migration and proliferation in response to growth factors other than MST1 ligand. The sequence is that of Macrophage-stimulating protein receptor (MST1R) from Homo sapiens (Human).